A 525-amino-acid polypeptide reads, in one-letter code: MNDFWQHCSALLERELTPQQYVTWIKPLAPVAFDASANTLSIAAPNRFKLDWVKSQFSGRISDLAREFWNTPIEVQFVLDPKAGMRSAAAGAAPAAPRAPLTPNGPAATVAAIAANLTANAAAAPSAPADVPMTPSAAAAHHLNADDADIDLPSLPAHEAAAGRRTWRPGPGAAPANGGEADSMYERSKLNPVLTFDNFVTGKANQLARAAAIQVADNPGISYNPLFLYGGVGLGKTHLIHAIGNQLLLDKAGARIRYIHAEQYVSDVVKAYQRKAFDDFKRYYHSLDLLLIDDIQFFSGKSRTQEEFFYAFEALVANKAQVIITSDTYPKEISGIDDRLISRFDSGLTVAIEPPELEMRVAILMRKAQSEGVNLSEDVAFFVAKHLRSNVRELEGALRKILAYSKFHGREISIELTKEALKDLLTVQNRQISVENIQKTVADFYNIKVADMYSKKRPANIARPRQIAMYLAKELTQKSLPEIGELFGGRDHTTVLHAVRKIADERSKDAQLNHELHVLEQTLKG.

Residues 1 to 71 are domain I, interacts with DnaA modulators; it reads MNDFWQHCSA…SDLAREFWNT (71 aa). A domain II region spans residues 71 to 188; the sequence is TPIEVQFVLD…GEADSMYERS (118 aa). The interval 160-182 is disordered; that stretch reads AAAGRRTWRPGPGAAPANGGEAD. A compositionally biased stretch (low complexity) spans 169–181; the sequence is PGPGAAPANGGEA. The interval 189–405 is domain III, AAA+ region; that stretch reads KLNPVLTFDN…GALRKILAYS (217 aa). Residues G233, G235, K236, and T237 each contribute to the ATP site. A domain IV, binds dsDNA region spans residues 406-525; the sequence is KFHGREISIE…LHVLEQTLKG (120 aa).

Belongs to the DnaA family. In terms of assembly, oligomerizes as a right-handed, spiral filament on DNA at oriC.

Its subcellular location is the cytoplasm. Plays an essential role in the initiation and regulation of chromosomal replication. ATP-DnaA binds to the origin of replication (oriC) to initiate formation of the DNA replication initiation complex once per cell cycle. Binds the DnaA box (a 9 base pair repeat at the origin) and separates the double-stranded (ds)DNA. Forms a right-handed helical filament on oriC DNA; dsDNA binds to the exterior of the filament while single-stranded (ss)DNA is stabiized in the filament's interior. The ATP-DnaA-oriC complex binds and stabilizes one strand of the AT-rich DNA unwinding element (DUE), permitting loading of DNA polymerase. After initiation quickly degrades to an ADP-DnaA complex that is not apt for DNA replication. Binds acidic phospholipids. The protein is Chromosomal replication initiator protein DnaA of Burkholderia orbicola (strain MC0-3).